Here is a 242-residue protein sequence, read N- to C-terminus: MSKIMNDIIQSLFPGNCFEELLINFNFFHPTCPKAVLSRGLGFAITLGSILLFVPQILKIQAARSAQGISAASQLLALVGAIGTASYSYRSGFVFSGWGDSFFVAVQLVIIILQIFLFSGQTMLSVGFLGIVSAVAYGVVSKSIPMQTLTAVQTAGIPIVVVSKLLQISQNYRAQSTGQLSLISVFLQFAGTLARVFTSVQDTGDMLLIVSYSTAAVLNGLIFAQFFMYWSHSESAAKKKRN.

In terms of domain architecture, PQ-loop 1 spans 37–95 (LSRGLGFAITLGSILLFVPQILKIQAARSAQGISAASQLLALVGAIGTASYSYRSGFVF). 7 helical membrane-spanning segments follow: residues 40–60 (GLGF…ILKI), 68–88 (GISA…ASYS), 98–118 (WGDS…IFLF), 120–140 (GQTM…YGVV), 148–168 (TLTA…LLQI), 180–200 (LSLI…FTSV), and 207–227 (LLIV…AQFF). The PQ-loop 2 domain maps to 152 to 202 (VQTAGIPIVVVSKLLQISQNYRAQSTGQLSLISVFLQFAGTLARVFTSVQD).

Belongs to the MPDU1 (TC 2.A.43.3) family.

It localises to the membrane. The sequence is that of Mannose-P-dolichol utilization defect 1 protein homolog from Caenorhabditis elegans.